Consider the following 465-residue polypeptide: Uronate isomerase (465 aa).

It belongs to the metallo-dependent hydrolases superfamily. Uronate isomerase family.

It catalyses the reaction D-glucuronate = D-fructuronate. The enzyme catalyses aldehydo-D-galacturonate = keto-D-tagaturonate. Its pathway is carbohydrate metabolism; pentose and glucuronate interconversion. The polypeptide is Uronate isomerase (Streptococcus equi subsp. equi (strain 4047)).